Consider the following 85-residue polypeptide: Dual endothelin-1/VEGF signal peptide receptor (85 aa).

Over 1–18 the chain is Extracellular; sequence MTMFKGSNEMKSRWNWGS. Residues 19-37 traverse the membrane as a helical segment; it reads ITCIICFTCVGSQLSMSSS. The Cytoplasmic segment spans residues 38–85; it reads KASNFSGPLQLYQRELEIFIVLTDVPNYRLIKENSHLHTTIVDQGRTV.

In terms of processing, N-glycosylated. In terms of tissue distribution, expressed in kidney. Expressed in endothelial cells.

It is found in the cell membrane. Its function is as follows. Dual receptor for both endothelin-1 and the signal sequence of vascular endothelial growth factor A. Does not act as a receptor for angiotensin-2. Does not bind the VEGFA mature protein. May play a role in angiogenesis with a significant role in cardiovascular and neural development. This is Dual endothelin-1/VEGF signal peptide receptor from Homo sapiens (Human).